A 613-amino-acid chain; its full sequence is WD40 repeat-containing protein HOS15 (613 aa).

Residues 5–37 (TSVELNFLVFRYLQESGFTHAAFTLGYEAGINK) enclose the LisH domain. 2 disordered regions span residues 101–174 (KKRK…REKM) and 193–214 (EIER…KQLG). WD repeat units follow at residues 263-302 (GHTS…FKAV), 322-362 (EKSK…STLS), 363-402 (KHKG…WKQQ), 405-443 (FHSG…PAKT), 446-485 (GHQG…FVHD), 488-536 (EHTK…MLCS), 539-580 (GHRE…KTYT), and 582-613 (NGGI…DFRM).

The protein resides in the nucleus. Its function is as follows. Acts as a repressor of cold stress-regulated gene expression. Interacts specifically with and promotes deacetylation of histone H4. Plays a role in gene regulation for plant acclimation and tolerance to cold stress. This chain is WD40 repeat-containing protein HOS15, found in Arabidopsis thaliana (Mouse-ear cress).